A 130-amino-acid chain; its full sequence is Mediator of RNA polymerase II transcription subunit 10 (130 aa).

It belongs to the Mediator complex subunit 10 family. In terms of assembly, component of the Mediator complex.

The protein resides in the nucleus. In terms of biological role, component of the Mediator complex, a coactivator involved in the regulated transcription of nearly all RNA polymerase II-dependent genes. Mediator functions as a bridge to convey information from gene-specific regulatory proteins to the basal RNA polymerase II transcription machinery. Mediator is recruited to promoters by direct interactions with regulatory proteins and serves as a scaffold for the assembly of a functional preinitiation complex with RNA polymerase II and the general transcription factors. The protein is Mediator of RNA polymerase II transcription subunit 10 (MED10) of Aedes aegypti (Yellowfever mosquito).